The sequence spans 149 residues: Large ribosomal subunit protein bL9 (149 aa).

The protein belongs to the bacterial ribosomal protein bL9 family.

Its function is as follows. Binds to the 23S rRNA. The sequence is that of Large ribosomal subunit protein bL9 from Legionella pneumophila (strain Paris).